A 278-amino-acid chain; its full sequence is MTRPQRWTTAVLDVEADGGLAVVQGDQGFLLDSNGALFPRSWLRALDLPVQSEHGIGYFDGEPVYLLVLQHSVVVEGCAWQGLRQFMLEGDFAVFQMLGYAAQVATWAREHRFCGACGRATVQIAGERAMYCEHDNLRLYPRISPSMIVLVTRGDEVLLARSPRFVSGMYSALAGFVEPGESAEDCVHREVMEEVQVRIKNLKYMGSQCWPFPHSMMLGFHAQYAGGDIVPQVDEIEDARWFHIDDLPPLPANRSIARYLIEAYLAERSGAPEPVLPG.

Position 84 (Arg84) interacts with substrate. 2 residues coordinate Zn(2+): Cys114 and Cys117. Glu127 is a substrate binding site. Zn(2+) is bound at residue Cys132. Tyr140 is a binding site for substrate. The Nudix hydrolase domain maps to 141–264 (PRISPSMIVL…SIARYLIEAY (124 aa)). Ala174, Glu190, and Glu194 together coordinate a divalent metal cation. The Nudix box signature appears at 175 to 196 (GFVEPGESAEDCVHREVMEEVQ). 208 to 215 (QCWPFPHS) is a binding site for substrate. Glu235 contacts a divalent metal cation. A substrate-binding site is contributed by Ala257.

It belongs to the Nudix hydrolase family. NudC subfamily. Homodimer. Mg(2+) is required as a cofactor. Mn(2+) serves as cofactor. It depends on Zn(2+) as a cofactor.

It catalyses the reaction a 5'-end NAD(+)-phospho-ribonucleoside in mRNA + H2O = a 5'-end phospho-adenosine-phospho-ribonucleoside in mRNA + beta-nicotinamide D-ribonucleotide + 2 H(+). The catalysed reaction is NAD(+) + H2O = beta-nicotinamide D-ribonucleotide + AMP + 2 H(+). The enzyme catalyses NADH + H2O = reduced beta-nicotinamide D-ribonucleotide + AMP + 2 H(+). In terms of biological role, mRNA decapping enzyme that specifically removes the nicotinamide adenine dinucleotide (NAD) cap from a subset of mRNAs by hydrolyzing the diphosphate linkage to produce nicotinamide mononucleotide (NMN) and 5' monophosphate mRNA. The NAD-cap is present at the 5'-end of some mRNAs and stabilizes RNA against 5'-processing. Has preference for mRNAs with a 5'-end purine. Catalyzes the hydrolysis of a broad range of dinucleotide pyrophosphates. This chain is NAD-capped RNA hydrolase NudC, found in Pseudomonas syringae pv. tomato (strain ATCC BAA-871 / DC3000).